Reading from the N-terminus, the 45-residue chain is Putative purine permease 9 (45 aa).

In terms of tissue distribution, not detected in seedlings, leaves, embryos or root and shoot meristems.

The protein is Putative purine permease 9 of Arabidopsis thaliana (Mouse-ear cress).